We begin with the raw amino-acid sequence, 208 residues long: dITP/XTP pyrophosphatase (208 aa).

16–21 (SNNKGK) contributes to the substrate binding site. The active-site Proton acceptor is the D79. Position 79 (D79) interacts with Mg(2+). Residues S80, 166–169 (FGYD), K189, and 194–195 (HR) contribute to the substrate site.

It belongs to the HAM1 NTPase family. In terms of assembly, homodimer. It depends on Mg(2+) as a cofactor.

It carries out the reaction XTP + H2O = XMP + diphosphate + H(+). The enzyme catalyses dITP + H2O = dIMP + diphosphate + H(+). It catalyses the reaction ITP + H2O = IMP + diphosphate + H(+). Its function is as follows. Pyrophosphatase that catalyzes the hydrolysis of nucleoside triphosphates to their monophosphate derivatives, with a high preference for the non-canonical purine nucleotides XTP (xanthosine triphosphate), dITP (deoxyinosine triphosphate) and ITP. Seems to function as a house-cleaning enzyme that removes non-canonical purine nucleotides from the nucleotide pool, thus preventing their incorporation into DNA/RNA and avoiding chromosomal lesions. The chain is dITP/XTP pyrophosphatase from Acinetobacter baumannii (strain AB307-0294).